Here is a 360-residue protein sequence, read N- to C-terminus: Probable nuclear hormone receptor HR38 (360 aa).

The interval 1–21 is disordered; that stretch reads GSSSPGVAPADNTGPRAAPSS. The segment at residues 23–98 is a DNA-binding region (nuclear receptor); sequence SQLCAVCGDT…VGMVKEVVRT (76 aa). 2 NR C4-type zinc fingers span residues 26–46 and 62–86; these read CAVCGDTAACQHYGVRTCEGC and CLAEKSCPVDKRRRNRCQFCWFQKC. The region spanning 122 to 357 is the NR LBD domain; that stretch reads PPISLITALV…PLIENMFRAS (236 aa).

The protein belongs to the nuclear hormone receptor family. NR4 subfamily. In terms of assembly, forms a heterodimer with USP.

The protein resides in the nucleus. The protein is Probable nuclear hormone receptor HR38 (HR38) of Bombyx mori (Silk moth).